The following is a 631-amino-acid chain: Guanylate-binding protein 4 (631 aa).

The GB1/RHD3-type G domain occupies 33-283 (SQPVVVVAIV…FASYIFTYAK (251 aa)). Residues 43–50 (GWSHTGKS) and 103–107 (DTEGL) contribute to the GTP site. The stretch at 492-592 (IAEKHTKKEA…GHNIKEMKQN (101 aa)) forms a coiled coil.

This sequence belongs to the TRAFAC class dynamin-like GTPase superfamily. GB1/RHD3 GTPase family. GB1 subfamily. As to quaternary structure, heterodimer with other family members, including GBP1, GBP2 and GBP5. Dimerization regulates subcellular location. Interacts with IRF7; preventing interaction between TRAF6 and IRF7, resulting in impaired TRAF6-mediated IRF7 ubiquitination. In terms of tissue distribution, mainly expressed in organs of the immune system, such as spleen and lymph nodes.

It localises to the golgi apparatus membrane. Its subcellular location is the cytoplasm. It is found in the nucleus. The protein localises to the perinuclear region. The enzyme catalyses GTP + H2O = GDP + phosphate + H(+). Interferon (IFN)-inducible GTPase that plays important roles in innate immunity against a diverse range of bacterial, viral and protozoan pathogens. Negatively regulates the antiviral response by inhibiting activation of IRF7 transcription factor. The sequence is that of Guanylate-binding protein 4 from Mus musculus (Mouse).